The chain runs to 243 residues: Large ribosomal subunit protein uL30 (243 aa).

The tract at residues 1 to 31 (MADKILTPESQLKKSKAQQKSAEQVAAERAA) is disordered. Residues 18-28 (QQKSAEQVAAE) are compositionally biased toward low complexity.

The protein belongs to the universal ribosomal protein uL30 family.

In Eremothecium gossypii (strain ATCC 10895 / CBS 109.51 / FGSC 9923 / NRRL Y-1056) (Yeast), this protein is Large ribosomal subunit protein uL30 (RPL7).